We begin with the raw amino-acid sequence, 457 residues long: GTPase Der (457 aa).

2 EngA-type G domains span residues 4-169 (PTIA…PENN) and 177-352 (IMMS…NQHR). Residues 10–17 (GRPNVGKS), 57–61 (DTGGL), 120–123 (NKCE), 183–190 (GRPNVGKS), 230–234 (DTAGI), and 295–298 (NKWD) contribute to the GTP site. Residues 353–438 (RRVTTSVVNE…PLILLWRGKQ (86 aa)) enclose the KH-like domain.

It belongs to the TRAFAC class TrmE-Era-EngA-EngB-Septin-like GTPase superfamily. EngA (Der) GTPase family. In terms of assembly, associates with the 50S ribosomal subunit.

Functionally, GTPase that plays an essential role in the late steps of ribosome biogenesis. The protein is GTPase Der of Prochlorococcus marinus (strain MIT 9215).